Here is a 342-residue protein sequence, read N- to C-terminus: Delta(6)-protoilludene synthase (342 aa).

Residues D81, N217, S221, and E225 each coordinate Mg(2+). The DDXXD motif signature appears at 81-85; that stretch reads DEYSD. (2E,6E)-farnesyl diphosphate contacts are provided by R306 and Y307.

Belongs to the terpene synthase family. Requires Mg(2+) as cofactor.

It catalyses the reaction (2E,6E)-farnesyl diphosphate = Delta(6)-protoilludene + diphosphate. Functionally, delta(6)-protoilludene synthase, part of the gene cluster that mediates the biosynthesis of melleolides, a range of antifungal and phytotoxic polyketide derivatives composed of an orsellinic acid (OA) moiety esterified to various sesquiterpene alcohols. The first step in melleolides biosynthesis is performed by the delta(6)-protoilludene synthase PRO1 which catalyzes the cyclization of farnesyl diphosphate to protoilludene. The orsellinic acid synthase armB produces OA by condensing acetyl-CoA with 3 malonyl-CoA units in a three-round chain elongation reaction folowed by a C2-C7 ring closure. ArmB further catalyzes the trans-esterification of OA to the various sesquiterpene alcohols resulting from the hydroxylation of protoilludene. The melleolides cluster also includes 5 cytochrome P450 monooxygenases, 4 NAD(+)-dependent oxidoreductases, one flavin-dependent oxidoreductase, and one O-methyltransferase. The cytochrome P450 monooxygenases may be involved in protoilludene hydroxylation to elaborate melleolides with multiple alcohol groups, such as melleolide D, which carries alcohol functionalities at C-4, C-5, C-10, and C-13. The role of the NAD(+)-dependent enzymes remains unknown. Numerous melleolides, including arnamial, show 5'-O-methylation of the aromatic moiety which may be catalyzed by the methyltransferase encoded in the cluster. The flavin-dependent oxidoreductase might represent the dehydrogenase yielding the aldehyde in position 1 of arnamial and other melleolides. Finally, several halogenases, localized outside of the cluster, are able to catalyze the transfer of a single chlorine atom to the melleolide backbone, resulting in a 6'-chloromelleolide product. This Armillaria ostoyae (Armillaria root rot fungus) protein is Delta(6)-protoilludene synthase.